A 154-amino-acid chain; its full sequence is Cold shock domain-containing protein C2 (154 aa).

Phosphoserine is present on serine 19. The tract at residues 38 to 62 (GGGIAPRDLPSPLPTKRTRTYSATA) is disordered. One can recognise a CSD domain in the interval 69–136 (VFKGVCKQFS…KFQAVEVVLT (68 aa)).

It localises to the nucleus. The protein localises to the cytoplasm. In terms of biological role, RNA-binding factor which binds specifically to the very 3'-UTR ends of both histone H1 and H3.3 mRNAs, encompassing the polyadenylation signal. Might play a central role in the negative regulation of histone variant synthesis in the developing brain. This chain is Cold shock domain-containing protein C2 (Csdc2), found in Mus musculus (Mouse).